A 136-amino-acid polypeptide reads, in one-letter code: Flagellar basal-body rod protein FlgC (136 aa).

The protein belongs to the flagella basal body rod proteins family. As to quaternary structure, the basal body constitutes a major portion of the flagellar organelle and consists of four rings (L,P,S, and M) mounted on a central rod. The rod consists of about 26 subunits of FlgG in the distal portion, and FlgB, FlgC and FlgF are thought to build up the proximal portion of the rod with about 6 subunits each.

The protein resides in the bacterial flagellum basal body. In Buchnera aphidicola subsp. Baizongia pistaciae (strain Bp), this protein is Flagellar basal-body rod protein FlgC (flgC).